The primary structure comprises 118 residues: MKMSYLRSGIVGFLAGASLSYAAGVQALISTSKQNKDELLTATEALETDKQLYKKIEKKIEELESSCVKKSSWEIQESEWKAMFQTMRVEYLELLEKQKTLGEVLNKLVEDRQTKFQF.

The first 22 residues, 1–22 (MKMSYLRSGIVGFLAGASLSYA), serve as a signal peptide directing secretion. A coiled-coil region spans residues 41 to 71 (TATEALETDKQLYKKIEKKIEELESSCVKKS).

This is an uncharacterized protein from Schizosaccharomyces pombe (strain 972 / ATCC 24843) (Fission yeast).